A 1031-amino-acid polypeptide reads, in one-letter code: uncharacterized protein (1031 aa).

The SWIM-type zinc finger occupies 50-85 (FKVQINLKTAAAHLDCSCSNDKQNCVHIIAALLKYN). One can recognise a Helicase ATP-binding domain in the interval 590–751 (RALEDNQFGG…WSCFDFVLPN (162 aa)). An ATP-binding site is contributed by 603–610 (DEMGLGKT). Residues 702–705 (DEAQ) carry the DEAQ box motif. Residues 868–1022 (ALNIIYEALE…EDVNFFKSLS (155 aa)) enclose the Helicase C-terminal domain.

Belongs to the SNF2/RAD54 helicase family.

This is an uncharacterized protein from Mycoplasma genitalium (strain ATCC 33530 / DSM 19775 / NCTC 10195 / G37) (Mycoplasmoides genitalium).